A 394-amino-acid chain; its full sequence is Lipid-A-disaccharide synthase (394 aa).

Belongs to the LpxB family.

It carries out the reaction a lipid X + a UDP-2-N,3-O-bis[(3R)-3-hydroxyacyl]-alpha-D-glucosamine = a lipid A disaccharide + UDP + H(+). Its pathway is bacterial outer membrane biogenesis; LPS lipid A biosynthesis. Its function is as follows. Condensation of UDP-2,3-diacylglucosamine and 2,3-diacylglucosamine-1-phosphate to form lipid A disaccharide, a precursor of lipid A, a phosphorylated glycolipid that anchors the lipopolysaccharide to the outer membrane of the cell. This Synechocystis sp. (strain ATCC 27184 / PCC 6803 / Kazusa) protein is Lipid-A-disaccharide synthase (lpxB).